Here is a 442-residue protein sequence, read N- to C-terminus: F-box/FBD/LRR-repeat protein At3g14710 (442 aa).

An F-box domain is found at 26-73 (DKFSSLLESVVSIILSQLPTAEAVSTSVLSKSWKNIWTNITDLHFDDT). LRR repeat units lie at residues 126-147 (NLQR…SLFP), 151-172 (SLVE…AILP), and 173-194 (NLKF…SKNL). Residues 370–414 (VESPDCVTTMLKVLQIRNFKPNRLQISVLRYVLDNAEILGSVILS) enclose the FBD domain.

The protein is F-box/FBD/LRR-repeat protein At3g14710 of Arabidopsis thaliana (Mouse-ear cress).